The primary structure comprises 375 residues: 23S rRNA (uracil(747)-C(5))-methyltransferase RlmC (375 aa).

Positions 3, 11, 14, and 87 each coordinate [4Fe-4S] cluster. Q212, F241, E262, and N307 together coordinate S-adenosyl-L-methionine. The Nucleophile role is filled by C334.

Belongs to the class I-like SAM-binding methyltransferase superfamily. RNA M5U methyltransferase family. RlmC subfamily.

The enzyme catalyses uridine(747) in 23S rRNA + S-adenosyl-L-methionine = 5-methyluridine(747) in 23S rRNA + S-adenosyl-L-homocysteine + H(+). In terms of biological role, catalyzes the formation of 5-methyl-uridine at position 747 (m5U747) in 23S rRNA. The polypeptide is 23S rRNA (uracil(747)-C(5))-methyltransferase RlmC (Shigella flexneri serotype 5b (strain 8401)).